The following is a 326-amino-acid chain: Aquaporin-4 (326 aa).

Residues 1–39 (MSDGAGAAARRWGKCGGRSCSRESIMVAFKGVWTQAFWK) lie on the Cytoplasmic side of the membrane. 2 S-palmitoyl cysteine lipidation sites follow: Cys15 and Cys20. A helical transmembrane segment spans residues 40–60 (AVTAEFLAMLIFVLLSVGSTI). Over 61–72 (NWGGSENPLPVD) the chain is Extracellular. Residues 73–92 (MVLISLCFGLSIATMVQCFG) form a helical membrane-spanning segment. Topologically, residues 93 to 96 (HISG) are cytoplasmic. The segment at residues 97–104 (GHINPAVT) is an intramembrane region (discontinuously helical). The short motif at 100–102 (NPA) is the NPA 1 element. Topologically, residues 105–118 (VAMVCTRKISIAKS) are cytoplasmic. Ser114 is subject to Phosphoserine; by PKG. The helical transmembrane segment at 119–139 (VFYITAQCLGAIIGAGILYLV) threads the bilayer. Over 140-158 (TPPNVVGGLGVTTVHGNLT) the chain is Extracellular. N-linked (GlcNAc...) asparagine glycosylation is present at Asn156. Residues 159–179 (AGHGLLVELIITFQLVFTIFA) form a helical membrane-spanning segment. Residues 180-187 (SCDSKRTD) lie on the Cytoplasmic side of the membrane. Phosphoserine; by PKC is present on Ser183. The chain crosses the membrane as a helical span at residues 188–208 (VTGSIALAIGFSVAIGHLFAI). Asn209 carries N-linked (GlcNAc...) asparagine glycosylation. The Extracellular segment spans residues 209 to 211 (NYT). Positions 212-225 (GASMNPARSFGPAV) form an intramembrane region, discontinuously helical. An NPA 2 motif is present at residues 216–218 (NPA). Topologically, residues 226 to 234 (IMGNWENHW) are extracellular. A helical membrane pass occupies residues 235-255 (IYWVGPIIGAVLAGALYEYVF). Residues 256 to 326 (CPDVELKRRL…DSAGEVLSSV (71 aa)) lie on the Cytoplasmic side of the membrane. 2 positions are modified to phosphoserine: Ser279 and Ser288. Thr292 bears the Phosphothreonine mark. Phosphoserine is present on Ser324.

The protein belongs to the MIP/aquaporin (TC 1.A.8) family. As to quaternary structure, homotetramer. The tetramers can form oligomeric arrays in membranes. The size of the oligomers differs between tissues and is smaller in skeletal muscle than in brain. Interaction between AQP4 oligomeric arrays in close-by cells can contribute to cell-cell adhesion. Part of a complex containing MLC1, TRPV4, HEPACAM and ATP1B1. Phosphorylation by PKC at Ser-183 reduces conductance by 50%. Phosphorylation by PKG at Ser-114 in response to glutamate increases conductance by 40%. Post-translationally, isoform Long: Palmitoylated on its N-terminal region.

Its subcellular location is the cell membrane. It is found in the basolateral cell membrane. The protein localises to the endosome membrane. The protein resides in the sarcolemma. It localises to the cell projection. The enzyme catalyses H2O(in) = H2O(out). Functionally, forms a water-specific channel. Plays an important role in brain water homeostasis and in glymphatic solute transport. Required for a normal rate of water exchange across the blood brain interface. Required for normal levels of cerebrospinal fluid influx into the brain cortex and parenchyma along paravascular spaces that surround penetrating arteries, and for normal drainage of interstitial fluid along paravenous drainage pathways. Thereby, it is required for normal clearance of solutes from the brain interstitial fluid, including soluble beta-amyloid peptides derived from APP. Plays a redundant role in urinary water homeostasis and urinary concentrating ability. In Notomys alexis (Spinifex hopping mouse), this protein is Aquaporin-4 (AQP4).